The following is a 165-amino-acid chain: Nucleotide-binding protein CHY_1197 (165 aa).

It belongs to the YajQ family.

Functionally, nucleotide-binding protein. The polypeptide is Nucleotide-binding protein CHY_1197 (Carboxydothermus hydrogenoformans (strain ATCC BAA-161 / DSM 6008 / Z-2901)).